A 144-amino-acid chain; its full sequence is uncharacterized protein (144 aa).

One can recognise a Rhodanese domain in the interval 50-140 (NQDKAIVVDT…YWKTDNLPLI (91 aa)).

This is an uncharacterized protein from Buchnera aphidicola subsp. Acyrthosiphon pisum (strain APS) (Acyrthosiphon pisum symbiotic bacterium).